The following is a 755-amino-acid chain: Xaa-Pro dipeptidyl-peptidase (755 aa).

Catalysis depends on charge relay system residues S348, D468, and H498.

This sequence belongs to the peptidase S15 family. In terms of assembly, homodimer.

It localises to the cytoplasm. It carries out the reaction Hydrolyzes Xaa-Pro-|- bonds to release unblocked, N-terminal dipeptides from substrates including Ala-Pro-|-p-nitroanilide and (sequentially) Tyr-Pro-|-Phe-Pro-|-Gly-Pro-|-Ile.. In terms of biological role, removes N-terminal dipeptides sequentially from polypeptides having unsubstituted N-termini provided that the penultimate residue is proline. The polypeptide is Xaa-Pro dipeptidyl-peptidase (Streptococcus thermophilus (strain ATCC BAA-250 / LMG 18311)).